A 269-amino-acid polypeptide reads, in one-letter code: 4-hydroxy-tetrahydrodipicolinate reductase (269 aa).

NAD(+) is bound by residues 11 to 16 (GASGRM) and glutamate 37. Residue arginine 38 participates in NADP(+) binding. NAD(+)-binding positions include 101-103 (GTT) and 125-128 (AGNM). Histidine 158 acts as the Proton donor/acceptor in catalysis. Histidine 159 serves as a coordination point for (S)-2,3,4,5-tetrahydrodipicolinate. The active-site Proton donor is the lysine 162. 168–169 (GT) is a (S)-2,3,4,5-tetrahydrodipicolinate binding site.

Belongs to the DapB family.

It is found in the cytoplasm. The enzyme catalyses (S)-2,3,4,5-tetrahydrodipicolinate + NAD(+) + H2O = (2S,4S)-4-hydroxy-2,3,4,5-tetrahydrodipicolinate + NADH + H(+). The catalysed reaction is (S)-2,3,4,5-tetrahydrodipicolinate + NADP(+) + H2O = (2S,4S)-4-hydroxy-2,3,4,5-tetrahydrodipicolinate + NADPH + H(+). Its pathway is amino-acid biosynthesis; L-lysine biosynthesis via DAP pathway; (S)-tetrahydrodipicolinate from L-aspartate: step 4/4. In terms of biological role, catalyzes the conversion of 4-hydroxy-tetrahydrodipicolinate (HTPA) to tetrahydrodipicolinate. The protein is 4-hydroxy-tetrahydrodipicolinate reductase of Cereibacter sphaeroides (strain KD131 / KCTC 12085) (Rhodobacter sphaeroides).